The chain runs to 157 residues: Transcription elongation factor GreA (157 aa).

It belongs to the GreA/GreB family.

Its function is as follows. Necessary for efficient RNA polymerase transcription elongation past template-encoded arresting sites. The arresting sites in DNA have the property of trapping a certain fraction of elongating RNA polymerases that pass through, resulting in locked ternary complexes. Cleavage of the nascent transcript by cleavage factors such as GreA or GreB allows the resumption of elongation from the new 3'terminus. GreA releases sequences of 2 to 3 nucleotides. This is Transcription elongation factor GreA from Maricaulis maris (strain MCS10) (Caulobacter maris).